Consider the following 457-residue polypeptide: Protein translocase subunit SecY (457 aa).

10 helical membrane passes run 17-37 (IFFTFSLLALCRIGVFIPVPG), 75-95 (IALGVVPYISASIIVQLLVVF), 118-138 (TRLFTLVLACVQSLLFAKFAL), 162-182 (WVFYLTTVVVMITGTLLLMWV), 195-215 (ISLIITLGILASFPSVLGSIF), 230-250 (IVSLLILCAVFVFVLMATVLI), 287-307 (VIPVIFASSLLMFPATIGQFL), 326-346 (VAYSIFYVLLIIFFTYFWTAT), 386-406 (LLGAVFLAVVAILPSILGRIL), and 412-432 (VSYFLGGTAMLIVVGVILDTM).

Belongs to the SecY/SEC61-alpha family. As to quaternary structure, component of the Sec protein translocase complex. Heterotrimer consisting of SecY, SecE and SecG subunits. The heterotrimers can form oligomers, although 1 heterotrimer is thought to be able to translocate proteins. Interacts with the ribosome. Interacts with SecDF, and other proteins may be involved. Interacts with SecA.

It localises to the cell inner membrane. Its function is as follows. The central subunit of the protein translocation channel SecYEG. Consists of two halves formed by TMs 1-5 and 6-10. These two domains form a lateral gate at the front which open onto the bilayer between TMs 2 and 7, and are clamped together by SecE at the back. The channel is closed by both a pore ring composed of hydrophobic SecY resides and a short helix (helix 2A) on the extracellular side of the membrane which forms a plug. The plug probably moves laterally to allow the channel to open. The ring and the pore may move independently. In Chlamydia trachomatis serovar D (strain ATCC VR-885 / DSM 19411 / UW-3/Cx), this protein is Protein translocase subunit SecY.